The primary structure comprises 191 residues: Probable chemoreceptor glutamine deamidase CheD (191 aa).

This sequence belongs to the CheD family.

The enzyme catalyses L-glutaminyl-[protein] + H2O = L-glutamyl-[protein] + NH4(+). In terms of biological role, probably deamidates glutamine residues to glutamate on methyl-accepting chemotaxis receptors (MCPs), playing an important role in chemotaxis. The protein is Probable chemoreceptor glutamine deamidase CheD of Hydrogenovibrio crunogenus (strain DSM 25203 / XCL-2) (Thiomicrospira crunogena).